The following is a 242-amino-acid chain: Protein CDV3 homolog B (242 aa).

Basic and acidic residues predominate over residues 1-15 (MAEPEERSLDDFFAK). The tract at residues 1–242 (MAEPEERSLD…DNQYAVLGEQ (242 aa)) is disordered. A2 carries the N-acetylalanine modification. A compositionally biased stretch (low complexity) spans 30 to 57 (AAGSRGPARPSDGATSSSLSSYVSAAGK). A compositionally biased stretch (basic and acidic residues) spans 59–75 (VKKEKSGKSENPDQLQE). Acidic residues predominate over residues 105 to 122 (KEDDENENKEEQGADWEE). 2 stretches are compositionally biased toward polar residues: residues 129-143 (DKSS…QAQA) and 183-194 (SDTQFPSPQATA). The span at 195-213 (KHTESRREKEMEKTFEIVK) shows a compositional bias: basic and acidic residues.

This sequence belongs to the CDV3 family.

It is found in the cytoplasm. The sequence is that of Protein CDV3 homolog B (cdv3-b) from Xenopus laevis (African clawed frog).